The chain runs to 135 residues: Transcriptional regulator HosA (135 aa).

Residues 4–134 enclose the HTH marR-type domain; that stretch reads RNKAFHQLRQ…FMQLVRKMMN (131 aa). Residues 48–71 constitute a DNA-binding region (H-T-H motif); sequence QVALIEAAVSTKATLAEMLARMEN.

In terms of biological role, involved in the temperature-dependent positive control of flagellum-driven swimming motility and cellular aggregation. Regulates fliC expression by directly interacting with fliC promoter. The protein is Transcriptional regulator HosA (hosA) of Escherichia coli O127:H6 (strain E2348/69 / EPEC).